A 990-amino-acid polypeptide reads, in one-letter code: TonB-dependent receptor P26 (990 aa).

Positions 86–93 (DEVVVIGY) match the TonB box motif. The TBDR plug domain occupies 97–213 (RKSDLTGSVS…ANGVVLVTTK (117 aa)). Residues 220-990 (SSKPEVSANI…TITLGLNVTF (771 aa)) form the TBDR beta-barrel domain. The tract at residues 878–902 (TPENPTSDIPRAGGDSVTGTPPNSA) is disordered. Positions 974 to 990 (GSYPNPRTITLGLNVTF) match the TonB C-terminal box motif.

It belongs to the TonB-dependent receptor family.

The protein localises to the cell outer membrane. In terms of biological role, tonB-dependent receptor probably involved in ulvan degradation. Ulvan is the main polysaccharide component of the Ulvales (green seaweed) cell wall. It is composed of disaccharide building blocks comprising 3-sulfated rhamnose (Rha3S) linked to D-glucuronic acid (GlcA), L-iduronic acid (IduA), or D-xylose (Xyl). The TonB-dependent receptor may mediate transport of ulvan oligosaccharides from the surface of the outer membrane to the periplasm for subsequent degradation. This Formosa agariphila (strain DSM 15362 / KCTC 12365 / LMG 23005 / KMM 3901 / M-2Alg 35-1) protein is TonB-dependent receptor P26.